Here is an 886-residue protein sequence, read N- to C-terminus: Alanine--tRNA ligase (886 aa).

Residues H570, H574, C673, and H677 each contribute to the Zn(2+) site.

This sequence belongs to the class-II aminoacyl-tRNA synthetase family. Zn(2+) is required as a cofactor.

Its subcellular location is the cytoplasm. It carries out the reaction tRNA(Ala) + L-alanine + ATP = L-alanyl-tRNA(Ala) + AMP + diphosphate. Catalyzes the attachment of alanine to tRNA(Ala) in a two-step reaction: alanine is first activated by ATP to form Ala-AMP and then transferred to the acceptor end of tRNA(Ala). Also edits incorrectly charged Ser-tRNA(Ala) and Gly-tRNA(Ala) via its editing domain. The protein is Alanine--tRNA ligase of Chlorobium chlorochromatii (strain CaD3).